Reading from the N-terminus, the 921-residue chain is Bifunctional aspartokinase/homoserine dehydrogenase, chloroplastic (921 aa).

Residues 1-87 (SLSSAISPSS…DDSVEKVHLP (87 aa)) constitute a chloroplast transit peptide. An aspartokinase region spans residues 88 to 339 (RGAMWSIHKF…VSEAVVLKTL (252 aa)). The interval 340-567 (SYQEAWEMSY…LSRTTIAVGI (228 aa)) is interface. ACT domains lie at 417 to 489 (VEGT…QVAN) and 498 to 575 (TVGQ…LIGA). Positions 568–921 (VGPGLIGATL…RLASYLGAPS (354 aa)) are homoserine dehydrogenase. Ile-573 contacts NAD(+). Positions 573, 605, 654, and 678 each coordinate NADP(+). An NADPH-binding site is contributed by Ile-573. Thr-654 contacts NAD(+). NADPH is bound by residues Thr-654 and Lys-678. 4 residues coordinate Na(+): Glu-705, Val-708, Ala-710, and Leu-712. 2 residues coordinate NADP(+): Gly-763 and Glu-766. L-homoserine is bound by residues Glu-766 and Asp-777. The Proton donor role is filled by Lys-781. Gly-898 serves as a coordination point for NAD(+). Position 898 (Gly-898) interacts with NADP(+). Gly-898 is a binding site for NADPH.

The protein in the N-terminal section; belongs to the aspartokinase family. It in the C-terminal section; belongs to the homoserine dehydrogenase family. A metal cation serves as cofactor.

It localises to the plastid. Its subcellular location is the chloroplast. The catalysed reaction is L-homoserine + NADP(+) = L-aspartate 4-semialdehyde + NADPH + H(+). The enzyme catalyses L-homoserine + NAD(+) = L-aspartate 4-semialdehyde + NADH + H(+). It carries out the reaction L-aspartate + ATP = 4-phospho-L-aspartate + ADP. It participates in amino-acid biosynthesis; L-lysine biosynthesis via DAP pathway; (S)-tetrahydrodipicolinate from L-aspartate: step 1/4. Its pathway is amino-acid biosynthesis; L-methionine biosynthesis via de novo pathway; L-homoserine from L-aspartate: step 1/3. It functions in the pathway amino-acid biosynthesis; L-methionine biosynthesis via de novo pathway; L-homoserine from L-aspartate: step 3/3. The protein operates within amino-acid biosynthesis; L-threonine biosynthesis; L-threonine from L-aspartate: step 1/5. It participates in amino-acid biosynthesis; L-threonine biosynthesis; L-threonine from L-aspartate: step 3/5. Functionally, bifunctional aspartate kinase and homoserine dehydrogenase that catalyzes the first and the third steps toward the synthesis of lysine, methionine and threonine from aspartate. This chain is Bifunctional aspartokinase/homoserine dehydrogenase, chloroplastic, found in Daucus carota (Wild carrot).